Here is a 313-residue protein sequence, read N- to C-terminus: uncharacterized protein (313 aa).

Alanine 29–aspartate 61 is a binding site for NADP(+).

The protein belongs to the short-chain dehydrogenases/reductases (SDR) family. 2,4-dienoyl-CoA reductase subfamily.

This is an uncharacterized protein from Caenorhabditis elegans.